A 349-amino-acid chain; its full sequence is UPF0324 inner membrane protein YeiH (349 aa).

The Periplasmic segment spans residues 1–12; sequence MTELTLQNHRRT. A helical membrane pass occupies residues 13–35; that stretch reads MWHFIPGLALSAVITGVALWGGA. Residues 36 to 38 are Cytoplasmic-facing; the sequence is IPA. A helical membrane pass occupies residues 39 to 61; the sequence is VAGAGFSALTLAILLGMVIGNTV. Residues 62–99 are Periplasmic-facing; that stretch reads YPQIWKQCDGGVLFAKQHLLRLGIILYGFRLTFSQIAD. A helical transmembrane segment spans residues 100-122; it reads VGISGIVIDVLTLSSTFMLACFL. Over 123 to 131 the chain is Cytoplasmic; it reads GQKVFGLDR. The chain crosses the membrane as a helical span at residues 132–151; that stretch reads HTSWLIGAGSSICGAAAVLA. The Periplasmic portion of the chain corresponds to 152–162; that stretch reads TEPVVKAEASK. A helical membrane pass occupies residues 163–185; sequence VTVAVATVVIFGTIAIFLYPAMY. Residues 186-261 are Cytoplasmic-facing; it reads PLLAHWFSPE…SPATGAEKSK (76 aa). Residues 262-284 form a helical membrane-spanning segment; that stretch reads ITIPWFAIFFIVVAIFNSFHLLP. Over 285-290 the chain is Periplasmic; that stretch reads KAVVDM. The chain crosses the membrane as a helical span at residues 291–313; that stretch reads LVTLDTVLLAMAMAALGLTTHVS. The Cytoplasmic portion of the chain corresponds to 314–322; the sequence is ALKKAGAKP. A helical membrane pass occupies residues 323 to 345; sequence LLMALALFAWLIIGGGAINVLIH. Over 346-349 the chain is Periplasmic; sequence SLIA.

The protein belongs to the UPF0324 family.

Its subcellular location is the cell inner membrane. This is UPF0324 inner membrane protein YeiH (yeiH) from Salmonella typhi.